Reading from the N-terminus, the 259-residue chain is Hemin import ATP-binding protein HmuV (259 aa).

An ABC transporter domain is found at 2 to 238 (IEARDLNVSI…ALLSEVFDCQ (237 aa)). Position 34–41 (34–41 (GPNGSGKS)) interacts with ATP.

The protein belongs to the ABC transporter superfamily. Heme (hemin) importer (TC 3.A.1.14.5) family. As to quaternary structure, the complex is composed of two ATP-binding proteins (HmuV), two transmembrane proteins (HmuU) and a solute-binding protein (HmuT).

Its subcellular location is the cell inner membrane. In terms of biological role, part of the ABC transporter complex HmuTUV involved in hemin import. Responsible for energy coupling to the transport system. This is Hemin import ATP-binding protein HmuV from Chelativorans sp. (strain BNC1).